Reading from the N-terminus, the 513-residue chain is uncharacterized protein (513 aa).

13 helical membrane passes run 3–23, 47–67, 71–91, 129–149, 153–173, 177–197, 233–253, 273–293, 320–340, 374–394, 395–415, 424–444, and 462–482; these read MTAF…TYFA, LAIA…GMIA, FDGF…LYIV, TFYM…LLGL, AAVL…GMIA, VQII…IIVF, ETLS…HILI, WIIG…AAFV, FLFA…VTGL, ASVA…SLNV, AFLV…LIVF, ASGA…LVSM, and LIPL…GAWL.

Belongs to the sodium:solute symporter (SSF) (TC 2.A.21) family.

The protein resides in the cell membrane. This is an uncharacterized protein from Bacillus subtilis (strain 168).